The sequence spans 217 residues: Homeobox protein Hox-B7 (217 aa).

Residues 126 to 131 (IYPWMR) carry the Antp-type hexapeptide motif. The segment at residues 137 to 196 (RKRGRQTYTRYQTLELEKEFHYNRYLTRRRRIEIAHTLCLTERQIKIWFQNRRMKWKKEN) is a DNA-binding region (homeobox). The disordered stretch occupies residues 192–217 (WKKENKTSGPGTTGQDKAEAEEEEEE).

The protein belongs to the Antp homeobox family. In terms of assembly, forms a DNA-binding heterodimer with transcription factor PBX1.

Its subcellular location is the nucleus. Its function is as follows. Sequence-specific transcription factor which is part of a developmental regulatory system that provides cells with specific positional identities on the anterior-posterior axis. The polypeptide is Homeobox protein Hox-B7 (Hoxb7) (Mus musculus (Mouse)).